The sequence spans 2348 residues: Transcription factor HIVEP3 (2348 aa).

The disordered stretch occupies residues 1 to 105 (MDPDQSIKGT…AFMSPGKPEH (105 aa)). The segment covering 27–72 (IQTSVSSSAPYPGSGTTAPSESATQELLATQPFSGPSQEKTGQQQK) has biased composition (polar residues). 2 C2H2-type zinc fingers span residues 185–207 (YICQ…IRSH) and 213–235 (YPCG…RKSH). The tract at residues 185-235 (YICQYCSRPCAKPSVLQKHIRSHTGERPYPCGPCGFSFKTKSNLYKHRKSH) is ZAS1. A no DNA binding activity or transactivation activity, but complete prevention of TRAF-dependent NF-Kappa-B activation; associates with TRAF2 and JUN region spans residues 204-1055 (IRSHTGERPY…KGKQESSEEP (852 aa)). Disordered regions lie at residues 239-401 (IKAG…SPPN), 475-532 (DSVK…PLLR), and 561-628 (ADPE…TKKG). Positions 257-280 (EMERIPGEEFEEPTEGESTDSEEE) are acidic 1. Positions 264 to 281 (EEFEEPTEGESTDSEEET) are enriched in acidic residues. Residues 298–323 (PLLSSSLYSSGSHGSSQERCSLSQSS) are compositionally biased toward low complexity. The segment covering 338-352 (SSEHPLSHKPEDTHT) has biased composition (basic and acidic residues). Polar residues-rich tracts occupy residues 372-401 (TFLS…SPPN) and 485-495 (TRRSSVESPKS). Low complexity-rich tracts occupy residues 513-527 (QSLL…STHP) and 589-605 (PLGG…SSKD). Over residues 606 to 623 (PTSKPSDEPEPKESDLTK) the composition is skewed to basic and acidic residues. The CCHC HIVEP-type zinc-finger motif lies at 633-663 (GANYECTICGARYKKRDNYEAHKKYYCSELQ). Disordered stretches follow at residues 692–1098 (KLGA…PPYT), 1229–1274 (LPPV…TSAP), 1386–1427 (EGCS…KADE), 1441–1555 (STED…EGTD), and 1654–1694 (EVHL…GEPA). Over residues 736–749 (STKSPAEASKSAPS) the composition is skewed to low complexity. The segment at 844-865 (EEPDRPDTEPEPPPKEPEKTEE) is acidic 2. Over residues 845–865 (EPDRPDTEPEPPPKEPEKTEE) the composition is skewed to basic and acidic residues. The Nuclear localization signal motif lies at 885–891 (PKKKRLR). Over residues 893–929 (AEMAQSSGESSFESSVPLSRSPSQESSISLSGSSRSA) the composition is skewed to low complexity. The span at 930 to 939 (SFDREDHGKA) shows a compositional bias: basic and acidic residues. Composition is skewed to polar residues over residues 975-985 (SEQSPNVPHSS), 1062-1073 (TKSSVPQISVGT), and 1247-1256 (SSSTEYSSDI). Positions 1409–1433 (METQQQKRVKEEEASKADEKLELVS) form a coiled coil. Composition is skewed to basic and acidic residues over residues 1416–1427 (RVKEEEASKADE), 1442–1452 (TEDRKKTEKPH), and 1518–1527 (VKKEDPKEQT). Residues 1538 to 1547 (LPLSDTSPKP) are compositionally biased toward low complexity. The segment covering 1665-1694 (SQKDPARVEKEEKQGKAEEGTPTSKRGEPA) has biased composition (basic and acidic residues). 2 consecutive C2H2-type zinc fingers follow at residues 1720 to 1742 (YVCE…IRTH) and 1748 to 1772 (YVCK…SKAH). Residues 1720 to 1772 (YVCEECGIRCKKPSMLKKHIRTHTDVRPYVCKHCHFAFKTKGNLTKHMKSKAH) are ZAS2. The tract at residues 1783–1841 (EELEAEEGTSDDLHQDSEGQEGAEAVEEHQFSDLEDSDSDSDLDEDEEEEEEEEESQDE) is acidic 3. Disordered stretches follow at residues 1786 to 1990 (EAEE…HLCG) and 2009 to 2038 (PAGL…ESPP). The span at 1815–1840 (DLEDSDSDSDLDEDEEEEEEEEESQD) shows a compositional bias: acidic residues. Over residues 1871 to 1902 (PDSTSDEVPQGSSISEATHLTASSCSTPSRGT) the composition is skewed to polar residues. 5 consecutive repeat copies span residues 1897-1900 (TPSR), 1927-1930 (SPRR), 1933-1936 (SPSK), 1961-1964 (SPAR), and 2024-2027 (SPTR). A compositionally biased stretch (polar residues) spans 1952–1961 (KNDSSPQQCS). Residues 2053 to 2148 (SPSADKSGLG…QLLSRAPCPL (96 aa)) are 5 X 4 AA tandem repeats of [ST]-P-X-[RK]. 2 disordered regions span residues 2184 to 2265 (SDLT…QGHQ) and 2284 to 2348 (KASS…PPSI). Over residues 2203–2216 (SPSASVSPVAKVSK) the composition is skewed to low complexity. The segment covering 2293-2314 (RSSSMDCLAETSTYSPPRSRNL) has biased composition (polar residues).

As to quaternary structure, interacts with TRAF1 and TRAF2 as well as with JUN. Forms a multimeric complex with RUNX2 and E3 ubiquitin ligase WWP1. In terms of processing, phosphorylated on threonine and serine residues. Phosphorylation by cyclin-dependent kinase CDK1 decreases HIVEP3 DNA binding affinity, and by epidermal growth factor receptor kinase increases its DNA binding affinity. Expressed in macrophages, lymphocytes, brain, thymus, spleen and bone marrow. Expressed in osteoblasts, whole bone and, to a lesser extent, in osteoclasts.

It localises to the cytoplasm. Its subcellular location is the nucleus. Its function is as follows. Plays a role of transcription factor; binds to recognition signal sequences (Rss heptamer) for somatic recombination of immunoglobulin and T-cell receptor gene segments; Also binds to the kappa-B motif of gene such as S100A4, involved in cell progression and differentiation. Kappa-B motif is a gene regulatory element found in promoters and enhancers of genes involved in immunity, inflammation, and growth and that responds to viral antigens, mitogens, and cytokines. Involvement of HIVEP3 in cell growth is strengthened by the fact that its down-regulation promotes cell cycle progression with ultimate formation of multinucleated giant cells. Strongly inhibits TNF-alpha-induced NF-kappa-B activation; Interferes with nuclear factor NF-kappa-B by several mechanisms: as transcription factor, by competing for Kappa-B motif and by repressing transcription in the nucleus; through a non transcriptional process, by inhibiting nuclear translocation of RELA by association with TRAF2, an adapter molecule in the tumor necrosis factor signaling, which blocks the formation of IKK complex. Interaction with TRAF proteins inhibits both NF-Kappa-B-mediated and c-Jun N-terminal kinase/JNK-mediated responses that include apoptosis and pro-inflammatory cytokine gene expression. Positively regulates the expression of IL2 in T-cell. Essential regulator of adult bone formation. The sequence is that of Transcription factor HIVEP3 (Hivep3) from Mus musculus (Mouse).